A 196-amino-acid polypeptide reads, in one-letter code: MNEAVSPGALSTLFTDARTHNGWRETPVSDETLREIYALMKWGPTSANCSPARIVFIRTAEGKERLRPALSSGNLQKTLTAPVTAIVAWDSEFYERLPQLFPHGDARSWFTSSPQLAEETAFRNSSMQAAYLIFACRALGLDTGPMSGFDRQYVDDAFFAGSTLKSNLLINIGYGDSSKLFARLPRLSFEEACGLL.

It belongs to the nitroreductase family. HadB/RutE subfamily. FMN is required as a cofactor.

It catalyses the reaction 3-hydroxypropanoate + NADP(+) = 3-oxopropanoate + NADPH + H(+). Functionally, may reduce toxic product malonic semialdehyde to 3-hydroxypropionic acid, which is excreted. This is Probable malonic semialdehyde reductase RutE from Escherichia coli O45:K1 (strain S88 / ExPEC).